Consider the following 59-residue polypeptide: Potassium channel toxin alpha-KTx 3.10 (59 aa).

The N-terminal stretch at 1–22 is a signal peptide; sequence MKVFFAVLIALFVCSMVIGIHG. 3 disulfides stabilise this stretch: Cys-30–Cys-50, Cys-36–Cys-55, and Cys-40–Cys-57.

Belongs to the short scorpion toxin superfamily. Potassium channel inhibitor family. Alpha-KTx 03 subfamily. Expressed by the venom gland.

It is found in the secreted. Inhibits insect potassium channel. Is at least a 100-fold more potent against the Drosophila Shaker channel than towards its mammalian homologs Kv1.1/KCNA1 and Kv1.3/KCNA3. This chain is Potassium channel toxin alpha-KTx 3.10, found in Buthus israelis (Israeli scorpion).